Reading from the N-terminus, the 713-residue chain is Subtilisin-like protease SBT4.9 (713 aa).

The N-terminal stretch at 1–24 (MARRADSFCLISCVLVSFVISVSA) is a signal peptide. Positions 25–113 (VTDDSQDKQV…VFPDINYKLQ (89 aa)) are cleaved as a propeptide — activation peptide. In terms of domain architecture, Inhibitor I9 spans 34-112 (VYVVYMGSLP…SVFPDINYKL (79 aa)). Positions 117–560 (SWDFLGLKEG…AGHVDPIAAI (444 aa)) constitute a Peptidase S8 domain. The Charge relay system role is filled by Asp145. Asn176 carries an N-linked (GlcNAc...) asparagine glycan. The active-site Charge relay system is His200. 2 N-linked (GlcNAc...) asparagine glycosylation sites follow: Asn215 and Asn223. The 60-residue stretch at 356 to 415 (NYPLYGGSTDGPLLRGKILVSEDKVSSEIVVANINENYHDYAYVSILPSSALSKDDFDSV) folds into the PA domain. Asn420 carries an N-linked (GlcNAc...) asparagine glycan. Residue Ser499 is the Charge relay system of the active site. N-linked (GlcNAc...) asparagine glycosylation is found at Asn536, Asn583, Asn627, and Asn637.

The protein belongs to the peptidase S8 family. Post-translationally, the C-terminal propeptide is autocleaved.

The protein resides in the secreted. This is Subtilisin-like protease SBT4.9 from Arabidopsis thaliana (Mouse-ear cress).